The chain runs to 102 residues: Protamine-2 (102 aa).

Positions 1–102 (MVRYRMRSLS…RTRRRRCRRH (102 aa)) are disordered. Phosphoserine is present on residues S8 and S10. Over residues 8 to 17 (SLSERSHEVH) the composition is skewed to basic and acidic residues. The span at 18 to 29 (GQQVHGQDQGHN) shows a compositional bias: low complexity. Positions 39 to 48 (EHVEVYERTH) are enriched in basic and acidic residues. The span at 49 to 102 (GHSHYRRRHCSRRRLHRIHRRRHRSCRRRRRRSCRHRRRHRRGCRTRRRRCRRH) shows a compositional bias: basic residues.

Belongs to the protamine P2 family. Interacts with TDRP. Post-translationally, proteolytic processing into mature chains is required for histone eviction during spermatogenesis. Transition proteins (TNP1 and TNP2) are required for processing. Testis.

It is found in the nucleus. Its subcellular location is the chromosome. Its function is as follows. Protamines substitute for histones in the chromatin of sperm during the haploid phase of spermatogenesis. They compact sperm DNA into a highly condensed, stable and inactive complex. This Macaca mulatta (Rhesus macaque) protein is Protamine-2 (PRM2).